A 337-amino-acid polypeptide reads, in one-letter code: MTLQIGVIGCGAIGQDHIRRLTRTLSGARVVAVNDIDPQQARDAVTKYGLDAEIYGDGHDVVAAADVQALLVTSWGPTHEAFVLDAIAHGKPVFCEKPLAVTADGCMRIVEAEVAHGKRLVQVGFMRPYDEGYRALKRVIDSGEIGAPLMLHCAHRNQSVGERYTTDMAITDTLIHELDVLRWLLGEDYASAQVVYPKKTRHASAHLADPQIVLLETVSGVRIDVEIFVNCQYGYDIQCEVVGENGIAKLPDPPAVGLKHAARQSVEIMTDWKERFIASYDVELQAFIDGVRAGALTGPSAWDGYAAAVAADACVRAQRSAAVEPIAMAERPAFYRG.

This sequence belongs to the Gfo/Idh/MocA family. In terms of assembly, homotetramer.

It carries out the reaction myo-inositol + NAD(+) = scyllo-inosose + NADH + H(+). Functionally, involved in the oxidation of myo-inositol (MI) to 2-keto-myo-inositol (2KMI or 2-inosose). The sequence is that of Inositol 2-dehydrogenase from Burkholderia vietnamiensis (strain G4 / LMG 22486) (Burkholderia cepacia (strain R1808)).